The sequence spans 205 residues: LexA repressor (205 aa).

Positions 29–49 (IRDICKATGLRSSSTVYNYLN) form a DNA-binding region, H-T-H motif. Catalysis depends on for autocatalytic cleavage activity residues serine 128 and lysine 165.

It belongs to the peptidase S24 family. In terms of assembly, homodimer.

The enzyme catalyses Hydrolysis of Ala-|-Gly bond in repressor LexA.. Functionally, represses a number of genes involved in the response to DNA damage (SOS response), including recA and lexA. In the presence of single-stranded DNA, RecA interacts with LexA causing an autocatalytic cleavage which disrupts the DNA-binding part of LexA, leading to derepression of the SOS regulon and eventually DNA repair. The sequence is that of LexA repressor from Moorella thermoacetica (strain ATCC 39073 / JCM 9320).